Here is a 251-residue protein sequence, read N- to C-terminus: Triosephosphate isomerase (251 aa).

12 to 14 lines the substrate pocket; sequence NWK. The Electrophile role is filled by H98. E168 serves as the catalytic Proton acceptor. Substrate contacts are provided by residues G174, S213, and 234 to 235; that span reads GG.

This sequence belongs to the triosephosphate isomerase family. Homodimer.

Its subcellular location is the cytoplasm. The catalysed reaction is D-glyceraldehyde 3-phosphate = dihydroxyacetone phosphate. The protein operates within carbohydrate biosynthesis; gluconeogenesis. It participates in carbohydrate degradation; glycolysis; D-glyceraldehyde 3-phosphate from glycerone phosphate: step 1/1. Involved in the gluconeogenesis. Catalyzes stereospecifically the conversion of dihydroxyacetone phosphate (DHAP) to D-glyceraldehyde-3-phosphate (G3P). In Bradyrhizobium diazoefficiens (strain JCM 10833 / BCRC 13528 / IAM 13628 / NBRC 14792 / USDA 110), this protein is Triosephosphate isomerase.